Reading from the N-terminus, the 155-residue chain is Regulatory protein RecX (155 aa).

The protein belongs to the RecX family.

The protein resides in the cytoplasm. In terms of biological role, modulates RecA activity. This is Regulatory protein RecX from Pseudomonas fluorescens (strain SBW25).